The chain runs to 140 residues: MFKEFKEFAFKGNVLDLAVAVVMGAAFNKIITSLVTYIIMPLIGLIFGTVDFAKNWSFMGIKYGLFVQSVIDFLIVAFALFLFVKLANTLMRKEEVEEEPEENIVLLTEIRDLLQQQNGTVTNETTNIFTETDDVDNKKF.

The next 3 membrane-spanning stretches (helical) occupy residues 7 to 27, 30 to 50, and 64 to 84; these read EFAF…GAAF, IITS…FGTV, and GLFV…FLFV.

Belongs to the MscL family. As to quaternary structure, homopentamer.

It localises to the cell membrane. In terms of biological role, channel that opens in response to stretch forces in the membrane lipid bilayer. May participate in the regulation of osmotic pressure changes within the cell. The polypeptide is Large-conductance mechanosensitive channel (Staphylococcus carnosus (strain TM300)).